A 438-amino-acid polypeptide reads, in one-letter code: uncharacterized protein (438 aa).

The region spanning 23-193 is the FAD-binding PCMH-type domain; the sequence is IHAKPPVVVV…VNATIRLTAA (171 aa). Residues 55–59, 60–61, Q65, D117, T122, 128–132, I183, Y393, and 430–433 contribute to the FAD site; these read VRGSG, HS, SVGGF, and APGY. At H60 the chain carries Pros-8alpha-FAD histidine.

This sequence belongs to the oxygen-dependent FAD-linked oxidoreductase family. Requires FAD as cofactor.

Its function is as follows. The FAS-operon encodes genes involved in cytokinin production and in host plant fasciation (leafy gall). This is an uncharacterized protein from Rhodococcoides fascians (Rhodococcus fascians).